Consider the following 685-residue polypeptide: MRLLIVLGLLWSLVATLLGSKWPEPVFGRLVSLGFPEKYGNHQDRSWTLTAPPGFRLRLYFTHFNLELSYRCEYDFVKLTSGTKVLATLCGQESTDTERAPGNDTFYSLGPSLKVTFHSDYSNEKPFTGFEAFYAAEDVDECRTSLGDSVPCDHYCHNYLGGYYCSCRVGYILHQNKHTCSALCSGQVFTGRSGFLSSPEYPQPYPKLSSCAYNIRLEEGFSITLDFVESFDVEMHPEAQCPYDSLKIQTDKREYGPFCGKTLPPRIETDSNKVTITFTTDESGNHTGWKIHYTSTAQPCPDPTAPPNGHISPVQATYVLKDSFSVFCKTGFELLQGSVPLKSFTAVCQKDGSWDRPIPECSIIDCGPPDDLPNGHVDYITGPEVTTYKAVIQYSCEETFYTMSSNGKYVCEADGFWTSSKGEKSLPVCKPVCGLSTHTSGGRIIGGQPAKPGDFPWQVLLLGETTAAGALIHDDWVLTAAHAVYGKTEAMSSLDIRMGILKRLSLIYTQAWPEAVFIHEGYTHGAGFDNDIALIKLKNKVTINRNIMPICLPRKEAASLMKTDFVGTVAGWGLTQKGFLARNLMFVDIPIVDHQKCATAYTKQPYPGAKVTVNMLCAGLDRGGKDSCRGDSGGALVFLDNETQRWFVGGIVSWGSINCGGSEQYGVYTKVTNYIPWIENIINNF.

Positions 1–19 are cleaved as a signal peptide; the sequence is MRLLIVLGLLWSLVATLLG. Residues 20–137 enclose the CUB 1 domain; sequence SKWPEPVFGR…TGFEAFYAAE (118 aa). Ca(2+)-binding residues include glutamate 67 and aspartate 75. The cysteines at positions 72 and 90 are disulfide-linked. N-linked (GlcNAc...) asparagine glycosylation occurs at asparagine 103. 5 residues coordinate Ca(2+): aspartate 120, serine 122, asparagine 123, aspartate 138, and valine 139. The region spanning 138–181 is the EGF-like; calcium-binding domain; the sequence is DVDECRTSLGDSVPCDHYCHNYLGGYYCSCRVGYILHQNKHTCS. 4 disulfides stabilise this stretch: cysteine 152–cysteine 165, cysteine 167–cysteine 180, cysteine 184–cysteine 211, and cysteine 241–cysteine 259. Asparagine 158 carries the (3R)-3-hydroxyasparagine modification. The Ca(2+) site is built by tyrosine 159 and glycine 162. A CUB 2 domain is found at 184 to 296; that stretch reads CSGQVFTGRS…TGWKIHYTST (113 aa). The N-linked (GlcNAc...) asparagine glycan is linked to asparagine 285. Sushi domains are found at residues 298 to 363 and 364 to 431; these read QPCP…ECSI and IDCG…VCKP. 7 disulfides stabilise this stretch: cysteine 300–cysteine 348, cysteine 328–cysteine 361, cysteine 366–cysteine 411, cysteine 396–cysteine 429, cysteine 433–cysteine 551, cysteine 597–cysteine 617, and cysteine 628–cysteine 659. Residues 444-683 enclose the Peptidase S1 domain; sequence IIGGQPAKPG…YIPWIENIIN (240 aa). Residues histidine 482 and aspartate 531 each act as charge relay system in the active site. Catalysis depends on serine 632, which acts as the Charge relay system. A glycan (N-linked (GlcNAc...) asparagine) is linked at asparagine 641.

It belongs to the peptidase S1 family. Homodimer; disulfide-linked. Binds MBL2. Isoform 2 binds to MASP1. Binds SERPING1. In terms of processing, N-glycosylated. Post-translationally, the iron and 2-oxoglutarate dependent 3-hydroxylation of aspartate and asparagine is (R) stereospecific within EGF domains. Highly expressed in liver. Secreted in plasma.

Its subcellular location is the secreted. The enzyme catalyses Selective cleavage after Arg-223 in complement component C2 (-Ser-Leu-Gly-Arg-|-Lys-Ile-Gln-Ile) and after Arg-76 in complement component C4 (-Gly-Leu-Gln-Arg-|-Ala-Leu-Glu-Ile).. In terms of biological role, serum protease that plays an important role in the activation of the complement system via mannose-binding lectin. After activation by auto-catalytic cleavage it cleaves C2 and C4, leading to their activation and to the formation of C3 convertase. In Rattus norvegicus (Rat), this protein is Mannan-binding lectin serine protease 2 (Masp2).